Here is a 209-residue protein sequence, read N- to C-terminus: Ribosomal RNA large subunit methyltransferase E (209 aa).

The S-adenosyl-L-methionine site is built by glycine 63, tryptophan 65, aspartate 83, aspartate 99, and aspartate 124. The active-site Proton acceptor is lysine 164.

The protein belongs to the class I-like SAM-binding methyltransferase superfamily. RNA methyltransferase RlmE family.

It localises to the cytoplasm. The catalysed reaction is uridine(2552) in 23S rRNA + S-adenosyl-L-methionine = 2'-O-methyluridine(2552) in 23S rRNA + S-adenosyl-L-homocysteine + H(+). Specifically methylates the uridine in position 2552 of 23S rRNA at the 2'-O position of the ribose in the fully assembled 50S ribosomal subunit. This is Ribosomal RNA large subunit methyltransferase E from Klebsiella pneumoniae (strain 342).